The following is a 1147-amino-acid chain: Sterol regulatory element-binding protein 1 (1147 aa).

Positions 1 to 60 are transcriptional activation (acidic); sequence MDEPPFSEAALEQALGEPCDLDAALLTDIEDMLQLINNQDSDFPGLFDPPYAGSGAGGTD. Residues 1-487 are Cytoplasmic-facing; it reads MDEPPFSEAA…HSRGMLDRSR (487 aa). Residues 27–35 carry the 9aaTAD motif; it reads TDIEDMLQL. A disordered region spans residues 39 to 193; it reads QDSDFPGLFD…PLPGLPLASP (155 aa). Composition is skewed to low complexity over residues 62–71 and 78–95; these read ASPDTSSPGS and TLSS…AAPS. Residues 96–105 show a composition bias toward pro residues; the sequence is PLSPPQPAPT. A phosphoserine mark is found at Ser-98 and Ser-117. Positions 170 to 190 are enriched in low complexity; sequence GGFSTGSPPGNTQQPLPGLPL. The segment at 234–497 is interaction with LMNA; it reads QQVPVLLQPH…LALCTLVFLC (264 aa). A bHLH domain is found at 323–373; the sequence is EKRTAHNAIEKRYRSSINDKIIELKDLVVGTEAKLNKSAVLRKAIDYIRFL. Ser-337 and Ser-338 each carry phosphoserine; by SIK1. Residues 373–394 form a leucine-zipper region; the sequence is LQHSNQKLKQENLSLRTAVHKS. At Ser-396 the chain carries Phosphoserine; by AMPK. The residue at position 402 (Ser-402) is a Phosphoserine; by SIK1. Residues 421–479 form a disordered region; sequence VEDTLTPPPSDAGSPFQSSPLSLGSRGSGSGGSGSDSEPDSPVFEDSKAKPEQRPSLHS. Residue Ser-457 is modified to Phosphoserine. Over residues 465–479 the composition is skewed to basic and acidic residues; sequence EDSKAKPEQRPSLHS. A helical transmembrane segment spans residues 488 to 508; it reads LALCTLVFLCLSCNPLASLLG. The Lumenal portion of the chain corresponds to 509 to 547; that stretch reads ARGLPSPSDTTSVYHSPGRNVLGTESRDGPGWAQWLLPP. A helical membrane pass occupies residues 548 to 568; sequence VVWLLNGLLVLVSLVLLFVYG. Topologically, residues 569–1147 are cytoplasmic; sequence EPVTRPHSGP…LGGGTTVTSS (579 aa). Ser-1060 carries the phosphoserine modification.

The protein belongs to the SREBP family. As to quaternary structure, forms a tight complex with SCAP, the SCAP-SREBP complex, in the endoplasmic reticulum membrane and the Golgi apparatus. Interacts with PAQR3; the interaction anchors the SCAP-SREBP complex to the Golgi apparatus in low cholesterol conditions. In terms of assembly, efficient DNA binding of the soluble transcription factor fragment requires dimerization with another bHLH protein. Interacts with CEBPA, the interaction produces a transcriptional synergy. Interacts with LMNA. Post-translationally, processed in the Golgi apparatus, releasing the protein from the membrane. At low cholesterol the SCAP-SREBP complex is recruited into COPII vesicles for export from the endoplasmic reticulum. In the Golgi, complex SREBPs are cleaved sequentially by site-1 (MBTPS1, S1P) and site-2 (MBTPS2, S2P) protease. The first cleavage by site-1 protease occurs within the luminal loop, the second cleavage by site-2 protease occurs within the first transmembrane domain, releasing the transcription factor from the Golgi membrane. Phosphorylated by AMPK, leading to suppress protein processing and nuclear translocation, and repress target gene expression. Phosphorylation at Ser-402 by SIK1 represses activity possibly by inhibiting DNA-binding. In terms of processing, SCAP-free SREBF1 is ubiquitinated by the BCR(ARMC5) complex, leading to its degradation. Post-translationally, ubiquitinated; the nuclear form has a rapid turnover and is rapidly ubiquitinated and degraded by the proteasome in the nucleus. As to expression, expressed in a wide variety of tissues, most abundant in liver and adrenal gland. In fetal tissues lung and liver shows highest expression. Predominates in hepatoma cell lines. Also expressed in kidney, brain, white fat, and muscle. In terms of tissue distribution, predominantly expressed in liver and adipose tissues. Also expressed in kidney, brain, white fat, and muscle.

The protein resides in the endoplasmic reticulum membrane. It is found in the golgi apparatus membrane. Its subcellular location is the cytoplasmic vesicle. The protein localises to the COPII-coated vesicle membrane. It localises to the nucleus. Its activity is regulated as follows. Activation by cleavage is down-regulated upon activation of SIRT3-dependent PRKAA1/AMPK-alpha signaling cascade which leads to inhibition of ATP-consuming lipogenesis to restore cellular energy balance. Precursor of the transcription factor form (Processed sterol regulatory element-binding protein 1), which is embedded in the endoplasmic reticulum membrane. Low sterol concentrations promote processing of this form, releasing the transcription factor form that translocates into the nucleus and activates transcription of genes involved in cholesterol biosynthesis and lipid homeostasis. Functionally, key transcription factor that regulates expression of genes involved in cholesterol biosynthesis and lipid homeostasis. Binds to the sterol regulatory element 1 (SRE-1) (5'-ATCACCCCAC-3'). Has dual sequence specificity binding to both an E-box motif (5'-ATCACGTGA-3') and to SRE-1 (5'-ATCACCCCAC-3'). Regulates the promoters of genes involved in cholesterol biosynthesis and the LDL receptor (LDLR) pathway of sterol regulation. Its function is as follows. Isoform expressed only in select tissues, which has higher transcriptional activity compared to SREBP-1C. Able to stimulate both lipogenic and cholesterogenic gene expression. Has a role in the nutritional regulation of fatty acids and triglycerides in lipogenic organs such as the liver. Required for innate immune response in macrophages by regulating lipid metabolism. In terms of biological role, predominant isoform expressed in most tissues, which has weaker transcriptional activity compared to isoform SREBP-1A. Primarily controls expression of lipogenic gene. Strongly activates global lipid synthesis in rapidly growing cells. The absence of Golgi proteolytic processing requirement makes this isoform constitutively active in transactivation of lipogenic gene promoters. The protein is Sterol regulatory element-binding protein 1 of Homo sapiens (Human).